The sequence spans 481 residues: MATKQEEQANLSDVLTPSMSLTELEMKFADETDGKAKDVVQARIKKAEDGILPLRLQFNDFTQIMSSLDEERYANVSKQEKFQMIRSKVLGLTERLQELSNDFEELQPLFATVGEYSKTYKNKNFQVLENLASYNHRGKAGASISNSTPTPAAATPTTAPTPGAGTKKAAKTAPTPTATATIGTPSNNAPTPATTATTPGTQAKKPRKPRQTKKQQQAAAAAAAVAQAQAQAQAQAQNQNQNNMQNKNISNPGMNSNMGTPVMGNPNMKQMQSPIPANAMNNMNVPHNGAMRPSVPNGNMGNPSMGNLNMNAPNMGNPNMNNPNMNNPNAMMSPMAGQGQLNQMFPMQNHNQNGQFMGQQSPGPNIGQMQFPPNNGNMNGMPGTSDMNLGMNPSMNMNMGMNLNQITPANILSMNTKGKDDQMQNIGMDQNQNQNQSQNQSQNQNQSMNMNMNNDSNNPKSAYDLVDFNSLDLSSLNMDFL.

Positions 79-107 (QEKFQMIRSKVLGLTERLQELSNDFEELQ) form a coiled coil. 2 disordered regions span residues 140-261 (AGAS…MGTP) and 415-463 (NTKG…KSAY). The span at 148 to 203 (TPTPAAATPTTAPTPGAGTKKAAKTAPTPTATATIGTPSNNAPTPATTATTPGTQA) shows a compositional bias: low complexity. A compositionally biased stretch (basic residues) spans 204–213 (KKPRKPRQTK). Residues 214–248 (KQQQAAAAAAAVAQAQAQAQAQAQNQNQNNMQNKN) show a composition bias toward low complexity. A compositionally biased stretch (polar residues) spans 249–259 (ISNPGMNSNMG). Low complexity predominate over residues 428–458 (MDQNQNQNQSQNQSQNQNQSMNMNMNNDSNN).

The protein belongs to the Mediator complex subunit 3 family. As to quaternary structure, component of the Mediator complex.

The protein resides in the nucleus. Its function is as follows. Component of the Mediator complex, a coactivator involved in regulated gene transcription of nearly all RNA polymerase II-dependent genes. Mediator functions as a bridge to convey information from gene-specific regulatory proteins to the basal RNA polymerase II transcription machinery. Mediator is recruited to promoters by direct interactions with regulatory proteins and serves as a scaffold for the assembly of a functional preinitiation complex with RNA polymerase II and the general transcription factors. This Candida glabrata (strain ATCC 2001 / BCRC 20586 / JCM 3761 / NBRC 0622 / NRRL Y-65 / CBS 138) (Yeast) protein is Mediator of RNA polymerase II transcription subunit 3 (PGD1).